We begin with the raw amino-acid sequence, 61 residues long: Small ribosomal subunit protein uS14 (61 aa).

Zn(2+)-binding residues include C24, C27, C40, and C43.

This sequence belongs to the universal ribosomal protein uS14 family. Zinc-binding uS14 subfamily. Part of the 30S ribosomal subunit. Contacts proteins S3 and S10. Zn(2+) is required as a cofactor.

Functionally, binds 16S rRNA, required for the assembly of 30S particles and may also be responsible for determining the conformation of the 16S rRNA at the A site. This Roseiflexus castenholzii (strain DSM 13941 / HLO8) protein is Small ribosomal subunit protein uS14.